The primary structure comprises 163 residues: Nucleotide-binding protein RHA1_ro01989 (163 aa).

The protein belongs to the YajQ family.

Its function is as follows. Nucleotide-binding protein. This Rhodococcus jostii (strain RHA1) protein is Nucleotide-binding protein RHA1_ro01989.